The primary structure comprises 279 residues: Shikimate dehydrogenase (NADP(+)) (279 aa).

Residues 19–21 and Thr-66 each bind shikimate; that span reads SRS. Lys-70 functions as the Proton acceptor in the catalytic mechanism. Positions 91 and 106 each coordinate shikimate. Residues 129–133, 152–157, and Ile-218 contribute to the NADP(+) site; these read GAGGA and NRTLER. Tyr-220 contributes to the shikimate binding site. Residue Gly-241 participates in NADP(+) binding.

Belongs to the shikimate dehydrogenase family. As to quaternary structure, homodimer.

The enzyme catalyses shikimate + NADP(+) = 3-dehydroshikimate + NADPH + H(+). It participates in metabolic intermediate biosynthesis; chorismate biosynthesis; chorismate from D-erythrose 4-phosphate and phosphoenolpyruvate: step 4/7. Involved in the biosynthesis of the chorismate, which leads to the biosynthesis of aromatic amino acids. Catalyzes the reversible NADPH linked reduction of 3-dehydroshikimate (DHSA) to yield shikimate (SA). This chain is Shikimate dehydrogenase (NADP(+)), found in Gluconobacter oxydans (strain 621H) (Gluconobacter suboxydans).